A 220-amino-acid polypeptide reads, in one-letter code: Adenylate kinase (220 aa).

ATP is bound at residue 10 to 15 (GAGKGT). An NMP region spans residues 30–59 (STGDMLRAAVKAGSPLGVEAKGYMDAGKLV). AMP is bound by residues Thr-31, Arg-36, 57 to 59 (KLV), 85 to 88 (GFPR), and Gln-92. Residues 122–150 (GRRTHPASGRTYHVKFNPPKVEGKDDVTG) form a disordered region. The LID stretch occupies residues 122-159 (GRRTHPASGRTYHVKFNPPKVEGKDDVTGEPLIQRDDD). Residues Arg-123 and 132-133 (TY) each bind ATP. Residues Arg-156 and Arg-167 each contribute to the AMP site. Residue Gly-206 coordinates ATP.

Belongs to the adenylate kinase family. In terms of assembly, monomer.

It localises to the cytoplasm. It carries out the reaction AMP + ATP = 2 ADP. It functions in the pathway purine metabolism; AMP biosynthesis via salvage pathway; AMP from ADP: step 1/1. In terms of biological role, catalyzes the reversible transfer of the terminal phosphate group between ATP and AMP. Plays an important role in cellular energy homeostasis and in adenine nucleotide metabolism. The sequence is that of Adenylate kinase from Burkholderia ambifaria (strain MC40-6).